Reading from the N-terminus, the 246-residue chain is Type III pantothenate kinase (246 aa).

Asp-11–Lys-18 contributes to the ATP binding site. Residues Tyr-95 and Gly-102–Arg-105 each bind substrate. Asp-104 functions as the Proton acceptor in the catalytic mechanism. Residue Asp-125 coordinates K(+). Thr-128 provides a ligand contact to ATP. Position 179 (Thr-179) interacts with substrate.

The protein belongs to the type III pantothenate kinase family. As to quaternary structure, homodimer. It depends on NH4(+) as a cofactor. K(+) serves as cofactor.

The protein resides in the cytoplasm. The catalysed reaction is (R)-pantothenate + ATP = (R)-4'-phosphopantothenate + ADP + H(+). It participates in cofactor biosynthesis; coenzyme A biosynthesis; CoA from (R)-pantothenate: step 1/5. In terms of biological role, catalyzes the phosphorylation of pantothenate (Pan), the first step in CoA biosynthesis. The polypeptide is Type III pantothenate kinase (Pseudoalteromonas atlantica (strain T6c / ATCC BAA-1087)).